Here is a 257-residue protein sequence, read N- to C-terminus: Movement protein (257 aa).

Residues 212-257 (NQSKKGSNKYVGKRNDNKGLNKEGKLFDKVRIGQNSESSDAESSSF) form a disordered region. Residues 224–242 (KRNDNKGLNKEGKLFDKVR) show a composition bias toward basic and acidic residues. The span at 247 to 257 (SESSDAESSSF) shows a compositional bias: low complexity.

This sequence belongs to the tobamovirus movement protein family.

The protein localises to the host cytoplasm. The protein resides in the host cytoskeleton. It localises to the host cell junction. It is found in the host plasmodesma. In terms of biological role, transports viral genome to neighboring plant cells directly through plasmosdesmata, without any budding. The movement protein allows efficient cell to cell propagation, by bypassing the host cell wall barrier. Forms a ribonucleoprotein complex with viral RNA. Binds microtubules and modulates microtubule stability. Can bind double-stranded DNA. This chain is Movement protein (MP), found in Pepper mild mottle virus (strain Spain) (PMMV-S).